The following is a 445-amino-acid chain: Tubulin beta-3 chain (445 aa).

The MREI motif signature appears at 1-4 (MREI). GTP contacts are provided by Q11, E69, S138, G142, T143, G144, N204, and N226. E69 contacts Mg(2+). A disordered region spans residues 425 to 445 (YQDATAEEEGEFEEEAEEEAE). Acidic residues predominate over residues 429–445 (TAEEEGEFEEEAEEEAE). E438 bears the 5-glutamyl polyglutamate mark.

The protein belongs to the tubulin family. As to quaternary structure, dimer of alpha and beta chains. A typical microtubule is a hollow water-filled tube with an outer diameter of 25 nm and an inner diameter of 15 nM. Alpha-beta heterodimers associate head-to-tail to form protofilaments running lengthwise along the microtubule wall with the beta-tubulin subunit facing the microtubule plus end conferring a structural polarity. Microtubules usually have 13 protofilaments but different protofilament numbers can be found in some organisms and specialized cells. Mg(2+) is required as a cofactor. In terms of processing, some glutamate residues at the C-terminus are polyglycylated, resulting in polyglycine chains on the gamma-carboxyl group. Glycylation is mainly limited to tubulin incorporated into axonemes (cilia and flagella) whereas glutamylation is prevalent in neuronal cells, centrioles, axonemes, and the mitotic spindle. Both modifications can coexist on the same protein on adjacent residues, and lowering polyglycylation levels increases polyglutamylation, and reciprocally. The precise function of polyglycylation is still unclear. Post-translationally, some glutamate residues at the C-terminus are polyglutamylated, resulting in polyglutamate chains on the gamma-carboxyl group. Polyglutamylation plays a key role in microtubule severing by spastin (SPAST). SPAST preferentially recognizes and acts on microtubules decorated with short polyglutamate tails: severing activity by SPAST increases as the number of glutamates per tubulin rises from one to eight, but decreases beyond this glutamylation threshold. As to expression, highly expressed in testis.

The protein resides in the cytoplasm. It is found in the cytoskeleton. Its function is as follows. Tubulin is the major constituent of microtubules, a cylinder consisting of laterally associated linear protofilaments composed of alpha- and beta-tubulin heterodimers. Microtubules grow by the addition of GTP-tubulin dimers to the microtubule end, where a stabilizing cap forms. Below the cap, tubulin dimers are in GDP-bound state, owing to GTPase activity of alpha-tubulin. TUBB3 plays a role in dorsal root ganglion axon projection towards the spinal cord. The sequence is that of Tubulin beta-3 chain from Gallus gallus (Chicken).